The following is a 265-amino-acid chain: Mlc titration factor A (265 aa).

Positions 111, 148, 152, and 211 each coordinate Zn(2+).

This sequence belongs to the MtfA family. Interacts with Mlc. Requires Zn(2+) as cofactor.

It is found in the cytoplasm. In terms of biological role, involved in the modulation of the activity of the glucose-phosphotransferase system (glucose-PTS). Interacts with the transcriptional repressor Mlc, preventing its interaction with DNA and leading to the modulation of expression of genes regulated by Mlc, including ptsG, which encodes the PTS system glucose-specific EIICB component. Its function is as follows. Shows zinc-dependent metallopeptidase activity. This chain is Mlc titration factor A, found in Escherichia coli (strain UTI89 / UPEC).